A 228-amino-acid polypeptide reads, in one-letter code: Small ribosomal subunit protein uS3 (228 aa).

Residues Thr-39–Arg-107 enclose the KH type-2 domain.

The protein belongs to the universal ribosomal protein uS3 family. In terms of assembly, part of the 30S ribosomal subunit. Forms a tight complex with proteins S10 and S14.

Binds the lower part of the 30S subunit head. Binds mRNA in the 70S ribosome, positioning it for translation. The protein is Small ribosomal subunit protein uS3 of Pseudomonas putida (strain ATCC 700007 / DSM 6899 / JCM 31910 / BCRC 17059 / LMG 24140 / F1).